The following is a 258-amino-acid chain: Imidazole glycerol phosphate synthase subunit HisF (258 aa).

Active-site residues include D11 and D130.

The protein belongs to the HisA/HisF family. As to quaternary structure, heterodimer of HisH and HisF.

Its subcellular location is the cytoplasm. It carries out the reaction 5-[(5-phospho-1-deoxy-D-ribulos-1-ylimino)methylamino]-1-(5-phospho-beta-D-ribosyl)imidazole-4-carboxamide + L-glutamine = D-erythro-1-(imidazol-4-yl)glycerol 3-phosphate + 5-amino-1-(5-phospho-beta-D-ribosyl)imidazole-4-carboxamide + L-glutamate + H(+). It functions in the pathway amino-acid biosynthesis; L-histidine biosynthesis; L-histidine from 5-phospho-alpha-D-ribose 1-diphosphate: step 5/9. Functionally, IGPS catalyzes the conversion of PRFAR and glutamine to IGP, AICAR and glutamate. The HisF subunit catalyzes the cyclization activity that produces IGP and AICAR from PRFAR using the ammonia provided by the HisH subunit. The polypeptide is Imidazole glycerol phosphate synthase subunit HisF (Methylobacterium sp. (strain 4-46)).